We begin with the raw amino-acid sequence, 292 residues long: Seed lectin (292 aa).

The first 37 residues, 1–37 (MATSNSRPHLLQTHKPFSVVLAISITFFLLLLNKVNS), serve as a signal peptide directing secretion. Residues N82 and N154 are each glycosylated (N-linked (GlcNAc...) asparagine). Mn(2+)-binding residues include D163 and D165. Ca(2+) contacts are provided by D165, H167, N169, and D172. Mn(2+) is bound by residues D172 and H177. N186 is a glycosylation site (N-linked (GlcNAc...) asparagine).

The protein belongs to the leguminous lectin family.

Mannose/glucose-specific lectin. The protein is Seed lectin of Styphnolobium japonicum (Japanese pagoda tree).